The primary structure comprises 367 residues: Tubulin-like protein CetZ (367 aa).

Residues 11-15, serine 111, 115-117, glutamate 148, asparagine 176, and asparagine 194 each bind GTP; these read QCGNR and GTG.

The protein belongs to the CetZ family.

Its subcellular location is the cytoplasm. Involved in cell shape control. This chain is Tubulin-like protein CetZ, found in Methanothrix thermoacetophila (strain DSM 6194 / JCM 14653 / NBRC 101360 / PT) (Methanosaeta thermophila).